A 557-amino-acid chain; its full sequence is Glutathione hydrolase proenzyme (557 aa).

Residues 1–24 (MQPVLFRTLSLGVAIAAASSSAFA) form the signal peptide. Residue Arg94 participates in L-glutamate binding. Catalysis depends on Thr364, which acts as the Nucleophile. L-glutamate-binding positions include Thr382, Asn384, Glu403, Asp406, 435–436 (SS), and 456–457 (GG).

The protein belongs to the gamma-glutamyltransferase family. In terms of assembly, this enzyme consists of two polypeptide chains, which are synthesized in precursor form from a single polypeptide. Post-translationally, cleaved by autocatalysis into a large and a small subunit.

It localises to the periplasm. The catalysed reaction is an N-terminal (5-L-glutamyl)-[peptide] + an alpha-amino acid = 5-L-glutamyl amino acid + an N-terminal L-alpha-aminoacyl-[peptide]. The enzyme catalyses glutathione + H2O = L-cysteinylglycine + L-glutamate. It catalyses the reaction an S-substituted glutathione + H2O = an S-substituted L-cysteinylglycine + L-glutamate. The protein operates within sulfur metabolism; glutathione metabolism. This chain is Glutathione hydrolase proenzyme (ggt), found in Pseudomonas aeruginosa (strain ATCC 15692 / DSM 22644 / CIP 104116 / JCM 14847 / LMG 12228 / 1C / PRS 101 / PAO1).